Here is a 62-residue protein sequence, read N- to C-terminus: uncharacterized protein (62 aa).

The helical transmembrane segment at 37 to 57 (FILGVILLGVIIESITLLVVY) threads the bilayer.

The protein resides in the membrane. This is an uncharacterized protein from Dictyostelium discoideum (Social amoeba).